A 216-amino-acid polypeptide reads, in one-letter code: Talanin (216 aa).

In terms of tissue distribution, isoform 4 is expressed in placenta, lung, kidney and pancreas.

Functionally, may play a role in uric acid excretion. This chain is Talanin (ZNF365), found in Homo sapiens (Human).